The following is an 89-amino-acid chain: Small ribosomal subunit protein bS20 (89 aa).

The protein belongs to the bacterial ribosomal protein bS20 family.

Its function is as follows. Binds directly to 16S ribosomal RNA. This is Small ribosomal subunit protein bS20 from Xanthobacter autotrophicus (strain ATCC BAA-1158 / Py2).